The following is a 517-amino-acid chain: General transcription factor IIF subunit 1 (517 aa).

Ala2 is modified (N-acetylalanine). Position 156 is a phosphothreonine (Thr156). A disordered region spans residues 178–458 (QQRRLKDQDQ…SGDVQVTEDA (281 aa)). Positions 210 to 225 (LEDDLEMSSDDSEASG) are enriched in acidic residues. Phosphoserine occurs at positions 217, 218, 221, and 224. The segment covering 232 to 251 (PKAKKKAPPSKGGRKKKKKK) has biased composition (basic residues). Composition is skewed to acidic residues over residues 255-270 (DEAFEDSDDGDFEGQE) and 303-325 (EQSESSEESEEEKPPEEDKEEEE). Thr331 carries the post-translational modification Phosphothreonine. A compositionally biased stretch (acidic residues) spans 343–355 (EESDSSEESDIDS). The segment covering 364–374 (AKKKTPPKRER) has biased composition (basic residues). Phosphoserine occurs at positions 377, 380, 381, and 385. Over residues 377–391 (SGGSSRGNSRPGTPS) the composition is skewed to low complexity. Thr389 carries the phosphothreonine modification. Ser391 is subject to Phosphoserine. A compositionally biased stretch (polar residues) spans 392-401 (TEAGSTSSTL). N6-acetyllysine is present on Lys407. The span at 428–452 (GPQSLSGKSTPQPQSGKSTPSSGDV) shows a compositional bias: polar residues. Ser431, Ser433, and Ser436 each carry phosphoserine. 2 positions are modified to phosphothreonine: Thr437 and Thr446. At Ser449 the chain carries Phosphoserine.

It belongs to the TFIIF alpha subunit family. As to quaternary structure, heterodimer of an alpha and a beta subunit. Interacts with GTF2F2, CTDP1, TAF6/TAFII80 and URI1. Interacts with GTF2B (via C-terminus and preferentially via acetylated form); this interaction prevents binding of GTF2B to GTF2F2. Part of TBP-based Pol II pre-initiation complex (PIC), in which Pol II core assembles with general transcription factors and other specific initiation factors including GTF2E1, GTF2E2, GTF2F1, GTF2F2, TCEA1, ERCC2, ERCC3, GTF2H2, GTF2H3, GTF2H4, GTF2H5, GTF2A1, GTF2A2, GTF2B and TBP; this large multi-subunit PIC complex mediates DNA unwinding and targets Pol II core to the transcription start site where the first phosphodiester bond forms. Post-translationally, phosphorylated on Ser and other residues by TAF1 and casein kinase II-like kinases.

The protein resides in the nucleus. TFIIF is a general transcription initiation factor that binds to RNA polymerase II and helps to recruit it to the initiation complex in collaboration with TFIIB. It promotes transcription elongation. The chain is General transcription factor IIF subunit 1 (GTF2F1) from Bos taurus (Bovine).